The chain runs to 257 residues: Small ribosomal subunit protein eS1 (257 aa).

The tract at residues threonine 236 to valine 257 is disordered. Over residues glutamate 239–aspartate 248 the composition is skewed to basic and acidic residues.

Belongs to the eukaryotic ribosomal protein eS1 family. As to quaternary structure, component of the small ribosomal subunit. Mature ribosomes consist of a small (40S) and a large (60S) subunit. The 40S subunit contains about 33 different proteins and 1 molecule of RNA (18S). The 60S subunit contains about 49 different proteins and 3 molecules of RNA (28S, 5.8S and 5S).

Its subcellular location is the cytoplasm. The protein is Small ribosomal subunit protein eS1 of Brugia malayi (Filarial nematode worm).